A 196-amino-acid chain; its full sequence is Translation initiation factor IF-3 (196 aa).

It belongs to the IF-3 family. In terms of assembly, monomer.

It is found in the cytoplasm. Its function is as follows. IF-3 binds to the 30S ribosomal subunit and shifts the equilibrium between 70S ribosomes and their 50S and 30S subunits in favor of the free subunits, thus enhancing the availability of 30S subunits on which protein synthesis initiation begins. The sequence is that of Translation initiation factor IF-3 from Wigglesworthia glossinidia brevipalpis.